The following is a 161-amino-acid chain: Regulator of ribonuclease activity A (161 aa).

It belongs to the RraA family. Homotrimer. Binds to both RNA-binding sites in the C-terminal region of Rne and to RhlB.

It is found in the cytoplasm. Functionally, globally modulates RNA abundance by binding to RNase E (Rne) and regulating its endonucleolytic activity. Can modulate Rne action in a substrate-dependent manner by altering the composition of the degradosome. Modulates RNA-binding and helicase activities of the degradosome. The protein is Regulator of ribonuclease activity A of Photobacterium profundum (strain SS9).